The chain runs to 335 residues: Methyltransferase pgmE (335 aa).

The protein belongs to the methyltransferase superfamily.

It participates in pigment biosynthesis. The protein operates within secondary metabolite biosynthesis. Its function is as follows. Methyltransferase; part of the gene cluster that mediates the biosynthesis of pleosporalin A, ascomycone A, as well as a third cryptic naphthoquinone derived pigment, all responsible for the coloration of conidia. Essential for the production of pleosporalin A, but not the 2 other final products. The pathway begins with the biosynthesis of the cyclized heptaketide 3-acetonyl-1,6,8-trihydroxy-2-naphthaldehyde by the NR-PKS pgmA. The C-6 hydroxyl group is further methylated by the O-methyltransferase pgmB to yield fusarubinaldehyde which is in turn oxidized by the cytochrome P450 monooxygenase pgmC at C-9. The C-1 hydroxyl group is then methylated spontaneously. Although pgmE, pgmD and pgmH are essential for the production of pleosporalin A, it is not the case for the 2 other final products and it remains difficult to assign a specific function to each enzyme. PgmF and pgmG seem not to be involved in pigment biosynthesis although they were regulated by the cluster-specific transcription factor pgmR. This Aspergillus terreus (strain NIH 2624 / FGSC A1156) protein is Methyltransferase pgmE.